We begin with the raw amino-acid sequence, 1279 residues long: ATP-dependent helicase/nuclease subunit A (1279 aa).

Positions 4 to 499 (TKWTDEQRQA…VKLFKNFRSR (496 aa)) constitute a UvrD-like helicase ATP-binding domain. 25–32 (AGAGAGKT) contacts ATP. The UvrD-like helicase C-terminal domain maps to 526-853 (EEALKVGASY…RIMSIHKSKG (328 aa)).

The protein belongs to the helicase family. AddA subfamily. As to quaternary structure, heterodimer of AddA and AddB/RexB. The cofactor is Mg(2+).

It carries out the reaction Couples ATP hydrolysis with the unwinding of duplex DNA by translocating in the 3'-5' direction.. The enzyme catalyses ATP + H2O = ADP + phosphate + H(+). The heterodimer acts as both an ATP-dependent DNA helicase and an ATP-dependent, dual-direction single-stranded exonuclease. Recognizes the chi site generating a DNA molecule suitable for the initiation of homologous recombination. The AddA nuclease domain is required for chi fragment generation; this subunit has the helicase and 3' -&gt; 5' nuclease activities. This is ATP-dependent helicase/nuclease subunit A from Clostridium botulinum (strain Hall / ATCC 3502 / NCTC 13319 / Type A).